Here is a 209-residue protein sequence, read N- to C-terminus: Guanylate kinase (209 aa).

In terms of domain architecture, Guanylate kinase-like spans 9 to 188 (GIMLVISSPS…SVHQIKCIFT (180 aa)). 16-23 (SPSGGGKT) contacts ATP.

The protein belongs to the guanylate kinase family.

The protein localises to the cytoplasm. It catalyses the reaction GMP + ATP = GDP + ADP. In terms of biological role, essential for recycling GMP and indirectly, cGMP. The chain is Guanylate kinase from Ehrlichia canis (strain Jake).